The primary structure comprises 509 residues: Maturase K (509 aa).

It belongs to the intron maturase 2 family. MatK subfamily.

Its subcellular location is the plastid. The protein localises to the chloroplast. Functionally, usually encoded in the trnK tRNA gene intron. Probably assists in splicing its own and other chloroplast group II introns. This Stylosanthes hamata (Caribbean stylo) protein is Maturase K.